Consider the following 77-residue polypeptide: Acyl carrier protein (77 aa).

In terms of domain architecture, Carrier spans 2–77 (SDIADRVKKI…DAVKFISEAA (76 aa)). Ser37 is subject to O-(pantetheine 4'-phosphoryl)serine.

The protein belongs to the acyl carrier protein (ACP) family. In terms of processing, 4'-phosphopantetheine is transferred from CoA to a specific serine of apo-ACP by AcpS. This modification is essential for activity because fatty acids are bound in thioester linkage to the sulfhydryl of the prosthetic group.

Its subcellular location is the cytoplasm. The protein operates within lipid metabolism; fatty acid biosynthesis. Functionally, carrier of the growing fatty acid chain in fatty acid biosynthesis. This Cereibacter sphaeroides (strain ATCC 17029 / ATH 2.4.9) (Rhodobacter sphaeroides) protein is Acyl carrier protein.